Reading from the N-terminus, the 182-residue chain is R-phycoerythrin subunit beta (182 aa).

Cys82 provides a ligand contact to (2R,3E)-phycoerythrobilin.

The protein belongs to the phycobiliprotein family. As to quaternary structure, homodimer. Post-translationally, contains one covalently linked phycoerythrobilin chromophore.

Its function is as follows. Green-light absorbing phycoerythrin of unknown function. The chain is R-phycoerythrin subunit beta (cpeB) from Prochlorococcus marinus (strain SARG / CCMP1375 / SS120).